A 133-amino-acid chain; its full sequence is Small ribosomal subunit protein uS8 (133 aa).

This sequence belongs to the universal ribosomal protein uS8 family. As to quaternary structure, part of the 30S ribosomal subunit. Contacts proteins S5 and S12.

One of the primary rRNA binding proteins, it binds directly to 16S rRNA central domain where it helps coordinate assembly of the platform of the 30S subunit. The sequence is that of Small ribosomal subunit protein uS8 from Chlamydia caviae (strain ATCC VR-813 / DSM 19441 / 03DC25 / GPIC) (Chlamydophila caviae).